Consider the following 373-residue polypeptide: UDP-N-acetylglucosamine--N-acetylmuramyl-(pentapeptide) pyrophosphoryl-undecaprenol N-acetylglucosamine transferase (373 aa).

Residues 14 to 16, Asn128, Arg165, Ser199, and Gln295 each bind UDP-N-acetyl-alpha-D-glucosamine; that span reads TAG.

Belongs to the glycosyltransferase 28 family. MurG subfamily.

The protein localises to the cell membrane. The catalysed reaction is di-trans,octa-cis-undecaprenyl diphospho-N-acetyl-alpha-D-muramoyl-L-alanyl-D-glutamyl-meso-2,6-diaminopimeloyl-D-alanyl-D-alanine + UDP-N-acetyl-alpha-D-glucosamine = di-trans,octa-cis-undecaprenyl diphospho-[N-acetyl-alpha-D-glucosaminyl-(1-&gt;4)]-N-acetyl-alpha-D-muramoyl-L-alanyl-D-glutamyl-meso-2,6-diaminopimeloyl-D-alanyl-D-alanine + UDP + H(+). Its pathway is cell wall biogenesis; peptidoglycan biosynthesis. Its function is as follows. Cell wall formation. Catalyzes the transfer of a GlcNAc subunit on undecaprenyl-pyrophosphoryl-MurNAc-pentapeptide (lipid intermediate I) to form undecaprenyl-pyrophosphoryl-MurNAc-(pentapeptide)GlcNAc (lipid intermediate II). In Mycobacterium sp. (strain JLS), this protein is UDP-N-acetylglucosamine--N-acetylmuramyl-(pentapeptide) pyrophosphoryl-undecaprenol N-acetylglucosamine transferase.